The primary structure comprises 258 residues: Probable enoyl-CoA hydratase (258 aa).

This sequence belongs to the enoyl-CoA hydratase/isomerase family.

It carries out the reaction a (3S)-3-hydroxyacyl-CoA = a (2E)-enoyl-CoA + H2O. It catalyses the reaction a 4-saturated-(3S)-3-hydroxyacyl-CoA = a (3E)-enoyl-CoA + H2O. It functions in the pathway lipid metabolism; fatty acid beta-oxidation. Involved in the degradation of long-chain fatty acids. The protein is Probable enoyl-CoA hydratase (fadB) of Bacillus subtilis (strain 168).